Here is a 381-residue protein sequence, read N- to C-terminus: 3-hydroxyisobutyryl-CoA hydrolase, mitochondrial (381 aa).

Residues 1-25 (MDRLLTISNHIGKNIRQFSTSTEEV) constitute a mitochondrion transit peptide. The substrate site is built by Glu-116, Gly-141, Glu-164, and Asp-172.

Belongs to the enoyl-CoA hydratase/isomerase family.

It localises to the mitochondrion. It carries out the reaction 3-hydroxy-2-methylpropanoyl-CoA + H2O = 3-hydroxy-2-methylpropanoate + CoA + H(+). It participates in amino-acid degradation; L-valine degradation. Functionally, hydrolyzes 3-hydroxyisobutyryl-CoA (HIBYL-CoA), a saline catabolite. The protein is 3-hydroxyisobutyryl-CoA hydrolase, mitochondrial (hibch) of Dictyostelium discoideum (Social amoeba).